Consider the following 238-residue polypeptide: Orotidine 5'-phosphate decarboxylase (238 aa).

Residues aspartate 10, lysine 32, 59-68, threonine 122, arginine 184, glutamine 193, glycine 213, and arginine 214 contribute to the substrate site; that span reads DLKLHDIPNT. Residue lysine 61 is the Proton donor of the active site.

The protein belongs to the OMP decarboxylase family. Type 1 subfamily. As to quaternary structure, homodimer.

The enzyme catalyses orotidine 5'-phosphate + H(+) = UMP + CO2. It functions in the pathway pyrimidine metabolism; UMP biosynthesis via de novo pathway; UMP from orotate: step 2/2. Catalyzes the decarboxylation of orotidine 5'-monophosphate (OMP) to uridine 5'-monophosphate (UMP). The chain is Orotidine 5'-phosphate decarboxylase from Bacillus cereus (strain ATCC 10987 / NRS 248).